We begin with the raw amino-acid sequence, 162 residues long: Putative 4-hydroxy-4-methyl-2-oxoglutarate aldolase (162 aa).

Substrate is bound by residues 75–78 and arginine 97; that span reads GDML. Aspartate 98 lines the a divalent metal cation pocket.

It belongs to the class II aldolase/RraA-like family. Homotrimer. The cofactor is a divalent metal cation.

It catalyses the reaction 4-hydroxy-4-methyl-2-oxoglutarate = 2 pyruvate. The catalysed reaction is oxaloacetate + H(+) = pyruvate + CO2. Functionally, catalyzes the aldol cleavage of 4-hydroxy-4-methyl-2-oxoglutarate (HMG) into 2 molecules of pyruvate. Also contains a secondary oxaloacetate (OAA) decarboxylase activity due to the common pyruvate enolate transition state formed following C-C bond cleavage in the retro-aldol and decarboxylation reactions. This Azotobacter vinelandii (strain DJ / ATCC BAA-1303) protein is Putative 4-hydroxy-4-methyl-2-oxoglutarate aldolase.